Consider the following 309-residue polypeptide: Homoserine kinase (309 aa).

88–98 (PLARGLGSSAA) is a binding site for ATP.

It belongs to the GHMP kinase family. Homoserine kinase subfamily.

It is found in the cytoplasm. It carries out the reaction L-homoserine + ATP = O-phospho-L-homoserine + ADP + H(+). It functions in the pathway amino-acid biosynthesis; L-threonine biosynthesis; L-threonine from L-aspartate: step 4/5. In terms of biological role, catalyzes the ATP-dependent phosphorylation of L-homoserine to L-homoserine phosphate. In Halalkalibacterium halodurans (strain ATCC BAA-125 / DSM 18197 / FERM 7344 / JCM 9153 / C-125) (Bacillus halodurans), this protein is Homoserine kinase.